The primary structure comprises 439 residues: MKYIYIKTWGCQMNEYDSSMIITLLEKNNQYSLTKSAENADILILNTCSIREKAQEKVFHQLGRWKKIKNNNPKVIIAVGGCVATQEGKEIFKRANYVDIIFGTQTLHRLPKMIDEVEKKRKLSIDISFPKLEKFKYFLAPKKKGYTADISIMEGCNKYCSFCVVPYTRGNEISRPCDDVLFEISLLAKQGIKEINLLGQNVNAYQGPTFNGKVCYFSELIRLVAEIDGIERIRFTTSNPLEFTDDIIEVYKDTPKLVSFLHLPVQSGSNKILNLMKRSYTTEDYTSIIKKLTIARPDIQISSDFIVGFPGESEIDFEKTIEFIKNINFDMSFSFIYSARPGTPASNMNDDLDLKEKKRRLYILQERINIQTMLWSRKMFGSIQSVLVEGVSDKNIMDLYGRTENNRVVTFQGSSKMIGQFVNVKIKKVHTHSLKGELF.

Residues 2–119 (KYIYIKTWGC…LPKMIDEVEK (118 aa)) enclose the MTTase N-terminal domain. Positions 11, 48, 82, 156, 160, and 163 each coordinate [4Fe-4S] cluster. The Radical SAM core domain occupies 142-374 (KKKGYTADIS…QERINIQTML (233 aa)). One can recognise a TRAM domain in the interval 377–439 (RKMFGSIQSV…HTHSLKGELF (63 aa)).

Belongs to the methylthiotransferase family. MiaB subfamily. Monomer. [4Fe-4S] cluster serves as cofactor.

The protein resides in the cytoplasm. It catalyses the reaction N(6)-dimethylallyladenosine(37) in tRNA + (sulfur carrier)-SH + AH2 + 2 S-adenosyl-L-methionine = 2-methylsulfanyl-N(6)-dimethylallyladenosine(37) in tRNA + (sulfur carrier)-H + 5'-deoxyadenosine + L-methionine + A + S-adenosyl-L-homocysteine + 2 H(+). Functionally, catalyzes the methylthiolation of N6-(dimethylallyl)adenosine (i(6)A), leading to the formation of 2-methylthio-N6-(dimethylallyl)adenosine (ms(2)i(6)A) at position 37 in tRNAs that read codons beginning with uridine. This is tRNA-2-methylthio-N(6)-dimethylallyladenosine synthase from Buchnera aphidicola subsp. Acyrthosiphon pisum (strain APS) (Acyrthosiphon pisum symbiotic bacterium).